Consider the following 255-residue polypeptide: Putative cysteine-rich repeat secretory protein 32 (255 aa).

The first 28 residues, M1 to S28, serve as a signal peptide directing secretion. Gnk2-homologous domains are found at residues Y35–S136 and Y143–F252.

It belongs to the cysteine-rich repeat secretory protein family.

The protein localises to the secreted. The sequence is that of Putative cysteine-rich repeat secretory protein 32 (CRRSP32) from Arabidopsis thaliana (Mouse-ear cress).